Consider the following 139-residue polypeptide: Ribonuclease P/MRP protein subunit POP5 (139 aa).

The protein belongs to the eukaryotic/archaeal RNase P protein component 2 family.

It localises to the nucleus. It catalyses the reaction Endonucleolytic cleavage of RNA, removing 5'-extranucleotides from tRNA precursor.. In terms of biological role, component of ribonuclease P, a protein complex that generates mature tRNA molecules by cleaving their 5'-ends. Also a component of RNase MRP, which cleaves pre-rRNA sequences. The protein is Ribonuclease P/MRP protein subunit POP5 of Schizosaccharomyces pombe (strain 972 / ATCC 24843) (Fission yeast).